We begin with the raw amino-acid sequence, 262 residues long: Small ribosomal subunit protein eS4x (262 aa).

Positions 42 to 104 (LPLVLIIRNR…TNENFRLLYD (63 aa)) constitute an S4 RNA-binding domain.

Belongs to the eukaryotic ribosomal protein eS4 family.

It localises to the cytoplasm. This chain is Small ribosomal subunit protein eS4x (RPS4D), found in Arabidopsis thaliana (Mouse-ear cress).